The chain runs to 526 residues: O-phosphoserine--tRNA(Cys) ligase (526 aa).

Substrate-binding positions include 189-191, 234-236, 276-277, and Asn-319; these read HMT, SAS, and YY.

The protein belongs to the class-II aminoacyl-tRNA synthetase family. O-phosphoseryl-tRNA(Cys) synthetase subfamily. As to quaternary structure, homotetramer. Interacts with SepCysS.

The catalysed reaction is tRNA(Cys) + O-phospho-L-serine + ATP = O-phospho-L-seryl-tRNA(Cys) + AMP + diphosphate. Its function is as follows. Catalyzes the attachment of O-phosphoserine (Sep) to tRNA(Cys). The polypeptide is O-phosphoserine--tRNA(Cys) ligase (Methanocorpusculum labreanum (strain ATCC 43576 / DSM 4855 / Z)).